The sequence spans 345 residues: Phenylalanine--tRNA ligase alpha subunit (345 aa).

Residue Glu-253 coordinates Mg(2+).

Belongs to the class-II aminoacyl-tRNA synthetase family. Phe-tRNA synthetase alpha subunit type 1 subfamily. In terms of assembly, tetramer of two alpha and two beta subunits. Mg(2+) serves as cofactor.

The protein resides in the cytoplasm. It carries out the reaction tRNA(Phe) + L-phenylalanine + ATP = L-phenylalanyl-tRNA(Phe) + AMP + diphosphate + H(+). In Nitratidesulfovibrio vulgaris (strain DSM 19637 / Miyazaki F) (Desulfovibrio vulgaris), this protein is Phenylalanine--tRNA ligase alpha subunit.